The sequence spans 241 residues: Adenosylcobinamide-GDP ribazoletransferase (241 aa).

5 helical membrane passes run 24-44 (IVFF…SIFY), 48-68 (FINQ…IYGF), 103-123 (VVTF…FNSI), 175-195 (VIIL…FSLI), and 218-238 (IIGF…LISF).

The protein belongs to the CobS family. The cofactor is Mg(2+).

The protein resides in the cell membrane. It catalyses the reaction alpha-ribazole + adenosylcob(III)inamide-GDP = adenosylcob(III)alamin + GMP + H(+). The catalysed reaction is alpha-ribazole 5'-phosphate + adenosylcob(III)inamide-GDP = adenosylcob(III)alamin 5'-phosphate + GMP + H(+). Its pathway is cofactor biosynthesis; adenosylcobalamin biosynthesis; adenosylcobalamin from cob(II)yrinate a,c-diamide: step 7/7. Functionally, joins adenosylcobinamide-GDP and alpha-ribazole to generate adenosylcobalamin (Ado-cobalamin). Also synthesizes adenosylcobalamin 5'-phosphate from adenosylcobinamide-GDP and alpha-ribazole 5'-phosphate. This chain is Adenosylcobinamide-GDP ribazoletransferase, found in Picrophilus torridus (strain ATCC 700027 / DSM 9790 / JCM 10055 / NBRC 100828 / KAW 2/3).